We begin with the raw amino-acid sequence, 312 residues long: MNGDIAVFAGNSNKQIAEEICTHLGIQSGKINLKKFSDGEISVKIEDNVRGKEVFIVQSTSAPANDHLMELILIMDALRRASVSSISVVIPYYGYGRQDRKVEPRVPISARVVADLIEVVGLDRILTMDLHADQIQGFFRVPVDNLHFAPVLAEYVNTKKIDDLVIVSPDSGGAERARAFGKKVNGSLAIIDKRRPKANVSEVMNVIGEIEGKNCILLDDMIDTAGTICKAADVLLKHGAKSVYCAATHGVLSGEAVDRINSTQFSEVVLANTIAIPESKKINKLKSLSVAPLFANAIQRIHTNQSVSTLFD.

ATP is bound by residues 38-40 (DGE) and 97-98 (RQ). Residues H131 and D170 each coordinate Mg(2+). K193 is a catalytic residue. Residues R195, D219, and 223-227 (DTAGT) each bind D-ribose 5-phosphate.

The protein belongs to the ribose-phosphate pyrophosphokinase family. Class I subfamily. Homohexamer. The cofactor is Mg(2+).

It is found in the cytoplasm. The enzyme catalyses D-ribose 5-phosphate + ATP = 5-phospho-alpha-D-ribose 1-diphosphate + AMP + H(+). The protein operates within metabolic intermediate biosynthesis; 5-phospho-alpha-D-ribose 1-diphosphate biosynthesis; 5-phospho-alpha-D-ribose 1-diphosphate from D-ribose 5-phosphate (route I): step 1/1. Involved in the biosynthesis of the central metabolite phospho-alpha-D-ribosyl-1-pyrophosphate (PRPP) via the transfer of pyrophosphoryl group from ATP to 1-hydroxyl of ribose-5-phosphate (Rib-5-P). This chain is Ribose-phosphate pyrophosphokinase, found in Leptospira interrogans serogroup Icterohaemorrhagiae serovar copenhageni (strain Fiocruz L1-130).